The primary structure comprises 419 residues: S-adenosylmethionine synthase (419 aa).

An ATP-binding site is contributed by H15. D17 serves as a coordination point for Mg(2+). E43 is a K(+) binding site. Residues E56 and Q100 each contribute to the L-methionine site. The tract at residues Q100–E110 is flexible loop. ATP contacts are provided by residues D171 to K173, K248 to F249, D257, R263 to K264, A280, and K284. D257 lines the L-methionine pocket. K288 is a binding site for L-methionine.

The protein belongs to the AdoMet synthase family. As to quaternary structure, homotetramer; dimer of dimers. The cofactor is Mg(2+). K(+) is required as a cofactor.

The protein localises to the cytoplasm. It carries out the reaction L-methionine + ATP + H2O = S-adenosyl-L-methionine + phosphate + diphosphate. Its pathway is amino-acid biosynthesis; S-adenosyl-L-methionine biosynthesis; S-adenosyl-L-methionine from L-methionine: step 1/1. Catalyzes the formation of S-adenosylmethionine (AdoMet) from methionine and ATP. The overall synthetic reaction is composed of two sequential steps, AdoMet formation and the subsequent tripolyphosphate hydrolysis which occurs prior to release of AdoMet from the enzyme. This is S-adenosylmethionine synthase from Synechococcus sp. (strain CC9311).